The sequence spans 166 residues: MADTGAPGGETLLFLTDEQLRKGIEAMFFAYRGFTADPDRILDQHDYGRAHHRAIHFINREPGLTVTTLISVLGVTKQSLNRVLRTLIDDGLVESRVGRRDKRERHLHLTEKGAVLERELSEAQRVRMRAAYRAAGPQAVAGFRQVLEAMMDPAMRRHYQMLKDAE.

Residues 17–152 (DEQLRKGIEA…FRQVLEAMMD (136 aa)) form the HTH marR-type domain. The segment at residues 66–89 (VTTLISVLGVTKQSLNRVLRTLID) is a DNA-binding region (H-T-H motif).

Functionally, necessary for photosynthetic and respiratory growth. The protein is HTH-type transcriptional regulator PetP (petP) of Rhodobacter capsulatus (strain ATCC BAA-309 / NBRC 16581 / SB1003).